Reading from the N-terminus, the 139-residue chain is Peptide methionine sulfoxide reductase MsrB (139 aa).

In terms of domain architecture, MsrB spans 8-130; that stretch reads DREWQRELSP…NSASLQLKTQ (123 aa). Zn(2+) is bound by residues cysteine 47, cysteine 50, cysteine 96, and cysteine 99. The Nucleophile role is filled by cysteine 119.

It belongs to the MsrB Met sulfoxide reductase family. The cofactor is Zn(2+).

It carries out the reaction L-methionyl-[protein] + [thioredoxin]-disulfide + H2O = L-methionyl-(R)-S-oxide-[protein] + [thioredoxin]-dithiol. The chain is Peptide methionine sulfoxide reductase MsrB from Acinetobacter baumannii (strain AB307-0294).